The following is a 290-amino-acid chain: tRNA(Ile)-lysidine synthase, chloroplastic (290 aa).

33–38 (SGGQDS) provides a ligand contact to ATP.

It belongs to the tRNA(Ile)-lysidine synthase family.

Its subcellular location is the plastid. It is found in the chloroplast. It catalyses the reaction cytidine(34) in tRNA(Ile2) + L-lysine + ATP = lysidine(34) in tRNA(Ile2) + AMP + diphosphate + H(+). Its function is as follows. Ligates lysine onto the cytidine present at position 34 of the AUA codon-specific tRNA(Ile) that contains the anticodon CAU, in an ATP-dependent manner. Cytidine is converted to lysidine, thus changing the amino acid specificity of the tRNA from methionine to isoleucine. This Cyanidioschyzon merolae (strain NIES-3377 / 10D) (Unicellular red alga) protein is tRNA(Ile)-lysidine synthase, chloroplastic.